The primary structure comprises 219 residues: Tegument protein UL14 (219 aa).

The interval 161-219 is disordered; the sequence is ANGPSRIGSHPTYTPTPTGPPGAPAAPLSRTPPSPAPPTGPATDPASASGFARDYPDGE. Residues 177–200 show a composition bias toward pro residues; it reads PTGPPGAPAAPLSRTPPSPAPPTG.

It belongs to the alphaherpesvirinae HHV-1 UL14 protein family. Interacts with UL51. In terms of processing, phosphorylated.

It is found in the virion tegument. Its subcellular location is the host cytoplasm. It localises to the host nucleus. Contributes to the nuclear transport of the viral transcriptional activator VP16 during the early phase of infection. Therefore, participates indirectly in the regulation of the immediate-early gene expression. Additionally, seems to be important for efficient nuclear targeting of capsids. The UL51-UL14 complex regulates final viral envelopment for efficient viral replication. This is Tegument protein UL14 from Human herpesvirus 1 (strain 17) (HHV-1).